The sequence spans 257 residues: Ras-related protein Rab-26 (257 aa).

The disordered stretch occupies residues 1 to 53 (MSRKKTPKSKGGSVPAASTLPAAANGPRLAHPRTARPGPEAPPNGPPQSGRPS). 9 residues coordinate GTP: Ser73, Gly74, Val75, Gly76, Lys77, Thr78, Cys79, Ser96, and Thr97. A Mg(2+)-binding site is contributed by Thr78. 2 short sequence motifs (switch) span residues 87–102 (GAFLAGTFISTVGIDF) and 120–137 (DTAGQERFRSVTHAYYRD). Mg(2+) is bound by residues Thr97 and Asp120. Positions 123, 178, 179, 181, 209, and 210 each coordinate GTP. 2 S-geranylgeranyl cysteine lipidation sites follow: Cys254 and Cys255.

Belongs to the small GTPase superfamily. Rab family. Interacts with ADRA2B. Interacts with RIMS1. The cofactor is Mg(2+). As to expression, expressed in pancreas, kidney, brain, submandibular gland, and lung.

The protein localises to the cytoplasmic vesicle. It localises to the secretory vesicle membrane. Its subcellular location is the golgi apparatus membrane. It catalyses the reaction GTP + H2O = GDP + phosphate + H(+). Regulated by guanine nucleotide exchange factors (GEFs) which promote the exchange of bound GDP for free GTP. Regulated by GTPase activating proteins (GAPs) which increase the GTP hydrolysis activity. Inhibited by GDP dissociation inhibitors (GDIs). The small GTPases Rab are key regulators of intracellular membrane trafficking, from the formation of transport vesicles to their fusion with membranes. Rabs cycle between an inactive GDP-bound form and an active GTP-bound form that is able to recruit to membranes different set of downstream effectors directly responsible for vesicle formation, movement, tethering and fusion. RAB26 mediates transport of ADRA2A and ADRA2B from the Golgi to the cell membrane. Plays a role in the maturation of zymogenic granules and in pepsinogen secretion in the stomach. Plays a role in the secretion of amylase from acinar granules in the parotid gland. The polypeptide is Ras-related protein Rab-26 (Rattus norvegicus (Rat)).